The primary structure comprises 515 residues: Probable cytosol aminopeptidase (515 aa).

Mn(2+) contacts are provided by lysine 277 and aspartate 282. Lysine 289 is an active-site residue. Residues aspartate 300, aspartate 359, and glutamate 361 each coordinate Mn(2+). Residue arginine 363 is part of the active site.

Belongs to the peptidase M17 family. It depends on Mn(2+) as a cofactor.

It is found in the cytoplasm. The enzyme catalyses Release of an N-terminal amino acid, Xaa-|-Yaa-, in which Xaa is preferably Leu, but may be other amino acids including Pro although not Arg or Lys, and Yaa may be Pro. Amino acid amides and methyl esters are also readily hydrolyzed, but rates on arylamides are exceedingly low.. The catalysed reaction is Release of an N-terminal amino acid, preferentially leucine, but not glutamic or aspartic acids.. In terms of biological role, presumably involved in the processing and regular turnover of intracellular proteins. Catalyzes the removal of unsubstituted N-terminal amino acids from various peptides. The polypeptide is Probable cytosol aminopeptidase (Streptomyces griseus subsp. griseus (strain JCM 4626 / CBS 651.72 / NBRC 13350 / KCC S-0626 / ISP 5235)).